Consider the following 572-residue polypeptide: Receptor-type adenylate cyclase GRESAG 4.2 (572 aa).

At R1–Q225 the chain is on the extracellular side. N10, N77, and N152 each carry an N-linked (GlcNAc...) asparagine glycan. The chain crosses the membrane as a helical span at residues L226 to M251. Residues R252–Q572 lie on the Cytoplasmic side of the membrane. The 156-residue stretch at T269–E424 folds into the Guanylate cyclase domain. Mg(2+) contacts are provided by D274 and D317.

Belongs to the adenylyl cyclase class-3 family. The cofactor is Mg(2+).

Its subcellular location is the cell membrane. It carries out the reaction ATP = 3',5'-cyclic AMP + diphosphate. Its function is as follows. Could act as a receptor for an unknown ligand. The polypeptide is Receptor-type adenylate cyclase GRESAG 4.2 (GRESAG 4.2) (Trypanosoma brucei brucei).